Reading from the N-terminus, the 481-residue chain is Proline--tRNA ligase (481 aa).

It belongs to the class-II aminoacyl-tRNA synthetase family. ProS type 3 subfamily. In terms of assembly, homodimer.

Its subcellular location is the cytoplasm. It carries out the reaction tRNA(Pro) + L-proline + ATP = L-prolyl-tRNA(Pro) + AMP + diphosphate. In terms of biological role, catalyzes the attachment of proline to tRNA(Pro) in a two-step reaction: proline is first activated by ATP to form Pro-AMP and then transferred to the acceptor end of tRNA(Pro). The sequence is that of Proline--tRNA ligase from Chlorobium phaeobacteroides (strain DSM 266 / SMG 266 / 2430).